Here is a 291-residue protein sequence, read N- to C-terminus: Urease accessory protein UreD (291 aa).

Belongs to the UreD family. UreD, UreF and UreG form a complex that acts as a GTP-hydrolysis-dependent molecular chaperone, activating the urease apoprotein by helping to assemble the nickel containing metallocenter of UreC. The UreE protein probably delivers the nickel.

The protein resides in the cytoplasm. Its function is as follows. Required for maturation of urease via the functional incorporation of the urease nickel metallocenter. The protein is Urease accessory protein UreD of Acinetobacter baumannii (strain SDF).